Reading from the N-terminus, the 195-residue chain is 7-methyl-GTP pyrophosphatase (195 aa).

The Proton acceptor role is filled by aspartate 70.

This sequence belongs to the Maf family. YceF subfamily. Requires a divalent metal cation as cofactor.

The protein localises to the cytoplasm. It carries out the reaction N(7)-methyl-GTP + H2O = N(7)-methyl-GMP + diphosphate + H(+). Nucleoside triphosphate pyrophosphatase that hydrolyzes 7-methyl-GTP (m(7)GTP). May have a dual role in cell division arrest and in preventing the incorporation of modified nucleotides into cellular nucleic acids. The polypeptide is 7-methyl-GTP pyrophosphatase (Shewanella sp. (strain MR-7)).